We begin with the raw amino-acid sequence, 412 residues long: Aspartate kinase Ask_LysC (412 aa).

One can recognise an ACT domain in the interval 265–332 (LTIRGVPDTP…QGIAAEMGAR (68 aa)).

Belongs to the aspartokinase family.

The protein resides in the cytoplasm. It carries out the reaction L-aspartate + ATP = 4-phospho-L-aspartate + ADP. It functions in the pathway amino-acid biosynthesis; L-lysine biosynthesis via DAP pathway; (S)-tetrahydrodipicolinate from L-aspartate: step 1/4. It participates in amino-acid biosynthesis; L-methionine biosynthesis via de novo pathway; L-homoserine from L-aspartate: step 1/3. Its pathway is amino-acid biosynthesis; L-threonine biosynthesis; L-threonine from L-aspartate: step 1/5. Allosterically and strongly feedback inhibited by tryptophan. Addition of lysine alone slightly enhances activity. The simultaneous addition of lysine and tryptophan leads to very strong feedback inhibition of the enzyme. The feedback control by tryptophan is reduced in the presence of the compatible solutes hydroxyectoine or ectoine. Functionally, involved in the biosynthesis of L-aspartate-beta-semialdehyde which is a central intermediate in the biosynthesis of different amino acids (L-lysine, L-methionine, L-threonine). Catalyzes the phosphorylation of the beta-carboxyl group of L-aspartate to yield 4-phospho-L-aspartate. The polypeptide is Aspartate kinase Ask_LysC (lysC) (Stutzerimonas stutzeri (strain A1501) (Pseudomonas stutzeri)).